The chain runs to 443 residues: ATP-dependent protease ATPase subunit HslU (443 aa).

ATP-binding positions include I18, 60–65 (GVGKTE), D256, E321, and R393.

This sequence belongs to the ClpX chaperone family. HslU subfamily. A double ring-shaped homohexamer of HslV is capped on each side by a ring-shaped HslU homohexamer. The assembly of the HslU/HslV complex is dependent on binding of ATP.

It is found in the cytoplasm. Functionally, ATPase subunit of a proteasome-like degradation complex; this subunit has chaperone activity. The binding of ATP and its subsequent hydrolysis by HslU are essential for unfolding of protein substrates subsequently hydrolyzed by HslV. HslU recognizes the N-terminal part of its protein substrates and unfolds these before they are guided to HslV for hydrolysis. The chain is ATP-dependent protease ATPase subunit HslU from Citrobacter koseri (strain ATCC BAA-895 / CDC 4225-83 / SGSC4696).